The following is a 153-amino-acid chain: Aspartate carbamoyltransferase regulatory chain (153 aa).

Zn(2+) is bound by residues Cys-109, Cys-114, Cys-138, and Cys-141.

This sequence belongs to the PyrI family. As to quaternary structure, contains catalytic and regulatory chains. Zn(2+) is required as a cofactor.

In terms of biological role, involved in allosteric regulation of aspartate carbamoyltransferase. The chain is Aspartate carbamoyltransferase regulatory chain from Shigella dysenteriae serotype 1 (strain Sd197).